The sequence spans 130 residues: Small ribosomal subunit protein uS9 (130 aa).

The segment covering 99-110 (KKAGFLTRDPRM) has biased composition (basic and acidic residues). Positions 99-130 (KKAGFLTRDPRMKERKKYGLKKARRAPQFSKR) are disordered. A compositionally biased stretch (basic residues) spans 111–130 (KERKKYGLKKARRAPQFSKR).

It belongs to the universal ribosomal protein uS9 family.

This is Small ribosomal subunit protein uS9 from Clostridium botulinum (strain Alaska E43 / Type E3).